We begin with the raw amino-acid sequence, 753 residues long: Polyadenylate-binding protein, cytoplasmic and nuclear (753 aa).

Over residues 1-26 (MSAEVSTTPAADNTVNGTPEATNAAA) the composition is skewed to polar residues. Positions 1 to 52 (MSAEVSTTPAADNTVNGTPEATNAAATSAPEVTAVESASPSTTPSASQPHSA) are disordered. Low complexity predominate over residues 37 to 52 (SASPSTTPSASQPHSA). RRM domains follow at residues 52–130 (ASLY…WSQR), 140–217 (GNVF…HHIS), 233–310 (TNVY…RAQK), and 336–460 (VNLY…LAQR). 2 disordered regions span residues 367–417 (VMRD…TEKK) and 602–645 (MGQG…REEV). Residues 379–417 (ESEKEKEKESNKENEKEGEEKTEEKPKESEEEPKKTEKK) are compositionally biased toward basic and acidic residues. The span at 605 to 631 (GIRGPGYGQGRGGAPVQGGPRPQGGRG) shows a compositional bias: gly residues. Residues 648–725 (TGGLTAQTLS…ALSVYDEYMK (78 aa)) form the PABC domain. Positions 728–753 (GEGEAPAESAKPKEDAAETATEENKS) are disordered. The segment covering 737-753 (AKPKEDAAETATEENKS) has biased composition (basic and acidic residues).

It belongs to the polyadenylate-binding protein type-1 family.

It is found in the cytoplasm. It localises to the nucleus. Its function is as follows. Binds the poly(A) tail of mRNA. Appears to be an important mediator of the multiple roles of the poly(A) tail in mRNA biogenesis, stability and translation. In the nucleus, involved in both mRNA cleavage and polyadenylation. Is also required for efficient mRNA export to the cytoplasm. Acts in concert with a poly(A)-specific nuclease (PAN) to affect poly(A) tail shortening, which may occur concomitantly with either nucleocytoplasmic mRNA transport or translational initiation. In the cytoplasm, stimulates translation initiation and regulates mRNA decay through translation termination-coupled poly(A) shortening, probably mediated by PAN. This Aspergillus fumigatus (strain ATCC MYA-4609 / CBS 101355 / FGSC A1100 / Af293) (Neosartorya fumigata) protein is Polyadenylate-binding protein, cytoplasmic and nuclear (pab1).